The primary structure comprises 732 residues: Polyribonucleotide nucleotidyltransferase (732 aa).

Mg(2+)-binding residues include aspartate 503 and aspartate 509. The 60-residue stretch at 570 to 629 (PRLTAIQVPVESIGLIIGKGGETIRSITEETGAEINIEDDGTVTIACSSNEGTKGAVEII) folds into the KH domain. The S1 motif domain occupies 639–713 (GTVYIGKVRD…GKTRFALSIK (75 aa)).

Belongs to the polyribonucleotide nucleotidyltransferase family. The cofactor is Mg(2+).

It is found in the cytoplasm. It carries out the reaction RNA(n+1) + phosphate = RNA(n) + a ribonucleoside 5'-diphosphate. Functionally, involved in mRNA degradation. Catalyzes the phosphorolysis of single-stranded polyribonucleotides processively in the 3'- to 5'-direction. The sequence is that of Polyribonucleotide nucleotidyltransferase from Chlorobium phaeovibrioides (strain DSM 265 / 1930) (Prosthecochloris vibrioformis (strain DSM 265)).